A 98-amino-acid polypeptide reads, in one-letter code: NADH-ubiquinone oxidoreductase chain 4L (98 aa).

3 consecutive transmembrane segments (helical) span residues 1-21 (MPYIYMNITLAFVISLIGTLM), 29-49 (SLLCLEGMMLSLFTLNALLSL), and 61-81 (LILLVFAACEAAVGLALLVMI).

This sequence belongs to the complex I subunit 4L family. Core subunit of respiratory chain NADH dehydrogenase (Complex I) which is composed of 45 different subunits.

Its subcellular location is the mitochondrion inner membrane. The catalysed reaction is a ubiquinone + NADH + 5 H(+)(in) = a ubiquinol + NAD(+) + 4 H(+)(out). In terms of biological role, core subunit of the mitochondrial membrane respiratory chain NADH dehydrogenase (Complex I) which catalyzes electron transfer from NADH through the respiratory chain, using ubiquinone as an electron acceptor. Part of the enzyme membrane arm which is embedded in the lipid bilayer and involved in proton translocation. The protein is NADH-ubiquinone oxidoreductase chain 4L (MT-ND4L) of Loxodonta africana (African elephant).